The following is a 453-amino-acid chain: Vitamin D3 receptor A (453 aa).

The nuclear receptor DNA-binding region spans 53–128 (PRICGVCGDK…IGMMKEFILT (76 aa)). Residues Cys56, Cys59, Cys73, Cys76, Cys92, Cys98, Cys108, and Cys111 each contribute to the Zn(2+) site. NR C4-type zinc fingers lie at residues 56–76 (CGVC…CEGC) and 92–111 (CPFN…CQAC). The tract at residues 129 to 158 (DEEVQRKKDLIMKRKEEEAAREARKPRLSD) is hinge. An NR LBD domain is found at 159-449 (EQMQIINSLV…LTPLVLEVFG (291 aa)). Residues Tyr175 and Ser265 each coordinate calcitriol. The segment at 274–292 (KMIPGFRDLTAEDQIALLK) is interaction with coactivator LXXLL motif. 4 residues coordinate calcitriol: Arg302, Ser306, His333, and His423. Residues 442 to 450 (PLVLEVFGS) carry the 9aaTAD motif.

It belongs to the nuclear hormone receptor family. NR1 subfamily. Homodimer in the absence of bound vitamin D3. Heterodimer with RXRA after vitamin D3 binding. Interacts with ncoa1 and possibly other coactivators, leading to a strong increase of transcription of target genes. Detected in embryo 24 to 48 hours after fertilization and in gastrula.

Its subcellular location is the nucleus. It localises to the cytoplasm. In terms of biological role, nuclear receptor for calcitriol, the active form of vitamin D3 which mediates the action of this vitamin on cells. Enters the nucleus upon vitamin D3 binding where it forms heterodimers with the retinoid X receptor/RXR. The VDR-RXR heterodimers bind to specific response elements on DNA and activate the transcription of vitamin D3-responsive target genes. Recruited to promoters via its interaction with BAZ1B/WSTF which mediates the interaction with acetylated histones, an essential step for VDR-promoter association. Plays a central role in calcium homeostasis. This is Vitamin D3 receptor A (vdra) from Danio rerio (Zebrafish).